Here is a 446-residue protein sequence, read N- to C-terminus: Putative RNA-ligase (446 aa).

Belongs to the asfivirus M448R family.

The protein resides in the virion. The chain is Putative RNA-ligase from African swine fever virus (isolate Tick/Malawi/Lil 20-1/1983) (ASFV).